Reading from the N-terminus, the 160-residue chain is Dr hemagglutinin structural subunit (160 aa).

The first 21 residues, 1-21, serve as a signal peptide directing secretion; that stretch reads MKKLAIMAAASMVFAVSSAHA. The segment at 22-75 is receptor-binding; that stretch reads GFTPSGTTGTTKLTVTEECQVRVGDLTVAKTRGQLTDAAPIGPVTVQALGCDAR.

The protein belongs to the Dr-adhesin family.

The protein resides in the fimbrium. In terms of biological role, hemagglutinins of uropathogenic E.coli mediate adherence to the upper urinary tract. These adhesins bind to the Dr blood group antigen and also agglutinate human erythrocytes in the presence of D-mannose (mannose-resistant hemagglutination (MRHA)). The polypeptide is Dr hemagglutinin structural subunit (draA) (Escherichia coli).